The following is a 101-amino-acid chain: Small ribosomal subunit protein uS10 (101 aa).

It belongs to the universal ribosomal protein uS10 family. Part of the 30S ribosomal subunit.

Its function is as follows. Involved in the binding of tRNA to the ribosomes. The protein is Small ribosomal subunit protein uS10 of Christiangramia forsetii (strain DSM 17595 / CGMCC 1.15422 / KT0803) (Gramella forsetii).